A 519-amino-acid chain; its full sequence is Cytochrome P450 monooxygenase apdE (519 aa).

Residues 27-47 (FVFFAFVVYSCFTIAVGWVVY) form a helical membrane-spanning segment. N-linked (GlcNAc...) asparagine glycans are attached at residues Asn-327 and Asn-379. Cys-466 is a binding site for heme. A glycan (N-linked (GlcNAc...) asparagine) is linked at Asn-508.

This sequence belongs to the cytochrome P450 family. Requires heme as cofactor.

The protein localises to the membrane. It functions in the pathway secondary metabolite biosynthesis. Cytochrome P450 monooxygenase; part of the gene cluster that mediates the biosynthesis of aspyridones. The polyketide-amino acid backbone preaspyridone A is first assembled by the PKS-NRPS hybrid apdA. The assembly of preaspyridone A is initiated by loading of malonyl-CoA onto apdA, followed by decarboxylation to yield the acetyl starter unit. The growing polyketide chain then elongates into a tetraketide. The adpA PKS module catalyzes three Claisen condensations, as well as beta-keto processing and methylation. Alpha-methylation step during polyketide synthesis is a prerequisite and a key checkpoint for chain transfer between PKS and NRPS modules. The downstream NRPS module contains the condensation (C), adenylation (A), and thiolation (T) domains and catalyzes the incorporation of tyrosine via the formation of the L-tyrosinyl-thioester and the amide linkage between L-tyrosinyl-thioester and the tetraketide. The bimodular assembly line is terminated with a reductase (R) domain that facilitates formation and release of the tetramic acid product. Because apdA lacks a designated enoylreductase (ER) domain, the required activity is provided the enoyl reductase apdC. ApdC appears to operate with different stereoselectivity in different PKS cycle. Combined with apdC, apdA is proposed to synthesize preaspyridone A via about 20 enzymatic steps. A number of oxidative steps performed successively by the cytochrome P450 monooxygenases apdE and apdB are required for the conversion of preaspyridone A to aspyridone A. The cytochrome P450 monooxygenase apdE is responsible for the oxidative dephenylation of preaspyridone A. Finally, the predicted FAD-dependent monooxygenase apdD and the acyl-CoA dehydrogenase apdG may be involved in the transformation of aspyridone A into aspyridone B. This Emericella nidulans (strain FGSC A4 / ATCC 38163 / CBS 112.46 / NRRL 194 / M139) (Aspergillus nidulans) protein is Cytochrome P450 monooxygenase apdE.